A 214-amino-acid chain; its full sequence is ATP-dependent Clp protease proteolytic subunit 2 (214 aa).

The active-site Nucleophile is serine 110. The active site involves histidine 135.

It belongs to the peptidase S14 family. As to quaternary structure, fourteen ClpP subunits assemble into 2 heptameric rings which stack back to back to give a disk-like structure with a central cavity, resembling the structure of eukaryotic proteasomes.

The protein localises to the cytoplasm. It carries out the reaction Hydrolysis of proteins to small peptides in the presence of ATP and magnesium. alpha-casein is the usual test substrate. In the absence of ATP, only oligopeptides shorter than five residues are hydrolyzed (such as succinyl-Leu-Tyr-|-NHMec, and Leu-Tyr-Leu-|-Tyr-Trp, in which cleavage of the -Tyr-|-Leu- and -Tyr-|-Trp bonds also occurs).. Functionally, cleaves peptides in various proteins in a process that requires ATP hydrolysis. Has a chymotrypsin-like activity. Plays a major role in the degradation of misfolded proteins. This Mycobacterium leprae (strain TN) protein is ATP-dependent Clp protease proteolytic subunit 2.